The following is a 442-amino-acid chain: Trigger factor (442 aa).

A PPIase FKBP-type domain is found at 165 to 250 (DDTAQIDFEG…LHKILQKELP (86 aa)).

This sequence belongs to the FKBP-type PPIase family. Tig subfamily.

The protein resides in the cytoplasm. The catalysed reaction is [protein]-peptidylproline (omega=180) = [protein]-peptidylproline (omega=0). Involved in protein export. Acts as a chaperone by maintaining the newly synthesized protein in an open conformation. Functions as a peptidyl-prolyl cis-trans isomerase. This is Trigger factor from Helicobacter hepaticus (strain ATCC 51449 / 3B1).